The sequence spans 134 residues: D-ribose pyranase (134 aa).

The active-site Proton donor is His20. Residues Asp28, His101, and 123–125 (YCN) each bind substrate.

The protein belongs to the RbsD / FucU family. RbsD subfamily. As to quaternary structure, homodecamer.

It localises to the cytoplasm. The enzyme catalyses beta-D-ribopyranose = beta-D-ribofuranose. It participates in carbohydrate metabolism; D-ribose degradation; D-ribose 5-phosphate from beta-D-ribopyranose: step 1/2. Its function is as follows. Catalyzes the interconversion of beta-pyran and beta-furan forms of D-ribose. This is D-ribose pyranase from Pseudomonas fluorescens (strain Pf0-1).